Reading from the N-terminus, the 20-residue chain is Mite allergen Der p 6 (20 aa).

Positions alanine 1–lysine 20 constitute a Peptidase S1 domain.

Belongs to the peptidase S1 family.

It localises to the secreted. Its function is as follows. Protease that shows specificity similar to chymotrypsin. The protein is Mite allergen Der p 6 (DERP6) of Dermatophagoides pteronyssinus (European house dust mite).